The following is a 154-amino-acid chain: Lipoprotein signal peptidase (154 aa).

The next 2 membrane-spanning stretches (helical) occupy residues Leu57–Tyr77 and Ile86–Val103. Residues Asp110 and Asp129 contribute to the active site. The helical transmembrane segment at Val124 to Val144 threads the bilayer.

Belongs to the peptidase A8 family.

The protein resides in the cell membrane. It carries out the reaction Release of signal peptides from bacterial membrane prolipoproteins. Hydrolyzes -Xaa-Yaa-Zaa-|-(S,diacylglyceryl)Cys-, in which Xaa is hydrophobic (preferably Leu), and Yaa (Ala or Ser) and Zaa (Gly or Ala) have small, neutral side chains.. Its pathway is protein modification; lipoprotein biosynthesis (signal peptide cleavage). This protein specifically catalyzes the removal of signal peptides from prolipoproteins. This chain is Lipoprotein signal peptidase, found in Clostridium acetobutylicum (strain ATCC 824 / DSM 792 / JCM 1419 / IAM 19013 / LMG 5710 / NBRC 13948 / NRRL B-527 / VKM B-1787 / 2291 / W).